Here is a 221-residue protein sequence, read N- to C-terminus: Uridylate kinase (221 aa).

7–11 contacts ATP; sequence KISGK. G43 contributes to the UMP binding site. 2 residues coordinate ATP: G44 and R48. Residues D62 and 109-115 each bind UMP; that span reads LQPGQST. Residues T135 and Y141 each coordinate ATP.

This sequence belongs to the UMP kinase family. As to quaternary structure, homohexamer.

The protein resides in the cytoplasm. The catalysed reaction is UMP + ATP = UDP + ADP. It participates in pyrimidine metabolism; CTP biosynthesis via de novo pathway; UDP from UMP (UMPK route): step 1/1. With respect to regulation, inhibited by UTP. Functionally, catalyzes the reversible phosphorylation of UMP to UDP. This chain is Uridylate kinase, found in Ignicoccus hospitalis (strain KIN4/I / DSM 18386 / JCM 14125).